Reading from the N-terminus, the 491-residue chain is Nucleoporin NUP42 (491 aa).

Residues Met1 to Gly25 form a C3H1-type zinc finger. Disordered regions lie at residues Pro23–Tyr82 and Thr92–Gly111. Positions Arg33 to Tyr64 are enriched in polar residues. FG repeat units follow at residues Phe110–Gly111, Phe259–Gly260, Phe302–Gly303, Phe312–Gly313, Phe333–Gly334, Phe342–Gly343, Phe363–Gly364, Phe375–Gly376, Phe379–Gly380, and Phe410–Gly411.

As to quaternary structure, probable component of the nuclear pore complex (NPC).

It localises to the nucleus. The protein localises to the nuclear pore complex. The protein resides in the nucleus membrane. Its function is as follows. Required for the export of mRNAs containing poly(A) tails from the nucleus into the cytoplasm. The polypeptide is Nucleoporin NUP42 (nup42) (Xenopus laevis (African clawed frog)).